Here is a 163-residue protein sequence, read N- to C-terminus: UPF0416 protein RBE_1121 (163 aa).

It belongs to the UPF0416 family.

This chain is UPF0416 protein RBE_1121, found in Rickettsia bellii (strain RML369-C).